The sequence spans 227 residues: Deoxyribose-phosphate aldolase (227 aa).

The active-site Proton donor/acceptor is Asp84. Residue Lys146 is the Schiff-base intermediate with acetaldehyde of the active site. The Proton donor/acceptor role is filled by Lys188.

The protein belongs to the DeoC/FbaB aldolase family. DeoC type 1 subfamily.

It localises to the cytoplasm. It catalyses the reaction 2-deoxy-D-ribose 5-phosphate = D-glyceraldehyde 3-phosphate + acetaldehyde. It participates in carbohydrate degradation; 2-deoxy-D-ribose 1-phosphate degradation; D-glyceraldehyde 3-phosphate and acetaldehyde from 2-deoxy-alpha-D-ribose 1-phosphate: step 2/2. In terms of biological role, catalyzes a reversible aldol reaction between acetaldehyde and D-glyceraldehyde 3-phosphate to generate 2-deoxy-D-ribose 5-phosphate. The protein is Deoxyribose-phosphate aldolase of Pyrobaculum islandicum (strain DSM 4184 / JCM 9189 / GEO3).